The following is a 171-amino-acid chain: Transcription factor pcr1 (171 aa).

Positions Asp10–His73 constitute a bZIP domain. The segment at Lys12–Arg51 is basic motif. The tract at residues Leu52–Leu66 is leucine-zipper. The segment at Gln125 to Ile171 is disordered. The segment covering Pro143 to Asp152 has biased composition (low complexity).

Belongs to the bZIP family. In terms of assembly, heterodimer of pcr1/mts2 and atf1/mts1.

The protein localises to the nucleus. Involved in regulation of gene expression for sexual development. Binds and activates CRE sites (cAMP-response elements, also known as M26 meiotic recombination hotspots). This is Transcription factor pcr1 (pcr1) from Schizosaccharomyces pombe (strain 972 / ATCC 24843) (Fission yeast).